The chain runs to 412 residues: AA9 family lytic polysaccharide monooxygenase A (412 aa).

Positions 1 to 20 are cleaved as a signal peptide; the sequence is MKTTTYSLLALAAASKLASA. Residues H21 and H103 each contribute to the Cu(2+) site. An intrachain disulfide couples C63 to C186. The N-linked (GlcNAc...) asparagine glycan is linked to N151. H172 is a binding site for O2. Position 183 (Y183) interacts with Cu(2+). N-linked (GlcNAc...) asparagine glycans are attached at residues N334 and N385. The 37-residue stretch at 373-409 folds into the CBM1 domain; sequence GVAKMYERCGGINHTGPTTCESGSVCKKWNPYYYQCV.

The protein belongs to the polysaccharide monooxygenase AA9 family. Cu(2+) is required as a cofactor.

It localises to the secreted. It carries out the reaction [(1-&gt;4)-beta-D-glucosyl]n+m + reduced acceptor + O2 = 4-dehydro-beta-D-glucosyl-[(1-&gt;4)-beta-D-glucosyl]n-1 + [(1-&gt;4)-beta-D-glucosyl]m + acceptor + H2O.. Its function is as follows. Lytic polysaccharide monooxygenase (LPMO) that depolymerizes crystalline and amorphous polysaccharides via the oxidation of scissile alpha- or beta-(1-4)-glycosidic bonds, yielding C4 oxidation products. Catalysis by LPMOs requires the reduction of the active-site copper from Cu(II) to Cu(I) by a reducing agent and H(2)O(2) or O(2) as a cosubstrate. The sequence is that of AA9 family lytic polysaccharide monooxygenase A (eglD) from Aspergillus niger (strain ATCC MYA-4892 / CBS 513.88 / FGSC A1513).